We begin with the raw amino-acid sequence, 354 residues long: Protein RecA (354 aa).

67 to 74 lines the ATP pocket; sequence GPESSGKT.

Belongs to the RecA family.

The protein localises to the cytoplasm. Functionally, can catalyze the hydrolysis of ATP in the presence of single-stranded DNA, the ATP-dependent uptake of single-stranded DNA by duplex DNA, and the ATP-dependent hybridization of homologous single-stranded DNAs. It interacts with LexA causing its activation and leading to its autocatalytic cleavage. This Serratia marcescens protein is Protein RecA.